A 303-amino-acid chain; its full sequence is Deoxyhypusine hydroxylase (303 aa).

Met-1 is modified (N-acetylmethionine). 6 HEAT-like PBS-type repeats span residues 23 to 49, 54 to 80, 87 to 113, 175 to 201, 206 to 232, and 239 to 265; these read ARFRALFTLRGLGGPVAISWISRAFDD, LKHELAYCLGQMQDRRAIPVLLDVLRD, VRHEAGEALGAIGDPEVLEILKQYSTD, DRYRAMFALRDAGGKEAALALAEGLRC, FRHEIGYVLGQMQHEAAVPQLAAALAQ, and VRHECAEALGAIARPACLAALRAHVAD. Fe cation-binding residues include His-56, His-89, and Glu-90. Fe cation contacts are provided by His-208, His-241, and Glu-242.

Belongs to the deoxyhypusine hydroxylase family. It depends on Fe(2+) as a cofactor.

It catalyses the reaction [eIF5A protein]-deoxyhypusine + AH2 + O2 = [eIF5A protein]-hypusine + A + H2O. It functions in the pathway protein modification; eIF5A hypusination. Functionally, catalyzes the hydroxylation of the N(6)-(4-aminobutyl)-L-lysine intermediate produced by deoxyhypusine synthase/DHPS on a critical lysine of the eukaryotic translation initiation factor 5A/eIF-5A. This is the second step of the post-translational modification of that lysine into an unusual amino acid residue named hypusine. Hypusination is unique to mature eIF-5A factor and is essential for its function. The polypeptide is Deoxyhypusine hydroxylase (Bos taurus (Bovine)).